A 404-amino-acid chain; its full sequence is Caspase-1 (404 aa).

A CARD domain is found at Met1–Thr91. The propeptide occupies Met1–Asp119. A disordered region spans residues Phe111–Ser132. Catalysis depends on residues His237 and Cys285. Residues Ser298–Asp316 constitute a propeptide that is removed on maturation. Residue Ser302 is modified to Phosphoserine.

This sequence belongs to the peptidase C14A family. As to quaternary structure, heterotetramer that consists of two anti-parallel arranged heterodimers, each one formed by a 20 kDa (Caspase-1 subunit p20) and a 10 kDa (Caspase-1 subunit p10) subunit. May be a component of the inflammasome, a protein complex which also includes PYCARD, CARD8 and NLRP2 and whose function would be the activation of pro-inflammatory caspases. Component of the AIM2 PANoptosome complex, a multiprotein complex that drives inflammatory cell death (PANoptosis). Both the p10 and p20 subunits interact with MEFV. Interacts with CARD17P/INCA and CARD18. Interacts with SERPINB1; this interaction regulates CASP1 activity. Heterotetramer that consists of two anti-parallel arranged heterodimers, each one formed by a 20 kDa (Caspase-1 subunit p20) and a 10 kDa (Caspase-1 subunit p10) subunit. The two subunits are derived from the precursor sequence by an autocatalytic mechanism. Post-translationally, ubiquitinated via 'Lys-11'-linked polyubiquitination. Deubiquitinated by USP8.

It localises to the cytoplasm. The protein localises to the cell membrane. The enzyme catalyses Strict requirement for an Asp residue at position P1 and has a preferred cleavage sequence of Tyr-Val-Ala-Asp-|-.. In terms of biological role, thiol protease involved in a variety of inflammatory processes by proteolytically cleaving other proteins, such as the precursors of the inflammatory cytokines interleukin-1 beta (IL1B) and interleukin 18 (IL18) as well as the pyroptosis inducer Gasdermin-D (GSDMD), into active mature peptides. Plays a key role in cell immunity as an inflammatory response initiator: once activated through formation of an inflammasome complex, it initiates a pro-inflammatory response through the cleavage of the two inflammatory cytokines IL1B and IL18, releasing the mature cytokines which are involved in a variety of inflammatory processes. Cleaves a tetrapeptide after an Asp residue at position P1. Also initiates pyroptosis, a programmed lytic cell death pathway, through cleavage of GSDMD. In contrast to cleavage of interleukin IL1B, recognition and cleavage of GSDMD is not strictly dependent on the consensus cleavage site but depends on an exosite interface on CASP1 that recognizes and binds the Gasdermin-D, C-terminal (GSDMD-CT) part. Cleaves and activates CASP7 in response to bacterial infection, promoting plasma membrane repair. Upon inflammasome activation, during DNA virus infection but not RNA virus challenge, controls antiviral immunity through the cleavage of CGAS, rendering it inactive. In apoptotic cells, cleaves SPHK2 which is released from cells and remains enzymatically active extracellularly. This Sus scrofa (Pig) protein is Caspase-1 (CASP1).